The primary structure comprises 74 residues: Protein SlyX homolog (74 aa).

The segment at 54–74 (QDRNPDAQEPYSLRDEIPPHY) is disordered.

This sequence belongs to the SlyX family.

The chain is Protein SlyX homolog from Neisseria gonorrhoeae (strain ATCC 700825 / FA 1090).